Here is a 458-residue protein sequence, read N- to C-terminus: Argininosuccinate lyase (458 aa).

It belongs to the lyase 1 family. Argininosuccinate lyase subfamily.

The protein resides in the cytoplasm. It carries out the reaction 2-(N(omega)-L-arginino)succinate = fumarate + L-arginine. It functions in the pathway amino-acid biosynthesis; L-arginine biosynthesis; L-arginine from L-ornithine and carbamoyl phosphate: step 3/3. The chain is Argininosuccinate lyase from Pelobacter propionicus (strain DSM 2379 / NBRC 103807 / OttBd1).